The following is a 197-amino-acid chain: MQIVLASQSPSRLMILRQAGVEPVIHPAHVDEDAIIAQLAGAEPDEIVTRLALAKAQAIAPEHPGDVVIGGDSMLLLDGQLQGKPHTPEATIERWRQQRGRTAHLITGHAICLGERRVVEASRTTIHFADASDTDIEAYARSGEPLQCAGAFTLEALGGWFIDAIEGDPSSVIGLSLPVVRRALYSFGLNASDFWTK.

Aspartate 72 functions as the Proton acceptor in the catalytic mechanism.

The protein belongs to the Maf family. Requires a divalent metal cation as cofactor.

The protein resides in the cytoplasm. It catalyses the reaction a ribonucleoside 5'-triphosphate + H2O = a ribonucleoside 5'-phosphate + diphosphate + H(+). The catalysed reaction is a 2'-deoxyribonucleoside 5'-triphosphate + H2O = a 2'-deoxyribonucleoside 5'-phosphate + diphosphate + H(+). Its function is as follows. Nucleoside triphosphate pyrophosphatase. May have a dual role in cell division arrest and in preventing the incorporation of modified nucleotides into cellular nucleic acids. The polypeptide is Nucleoside triphosphate pyrophosphatase (Corynebacterium efficiens (strain DSM 44549 / YS-314 / AJ 12310 / JCM 11189 / NBRC 100395)).